The following is a 296-amino-acid chain: Phosphatidylglycerol--prolipoprotein diacylglyceryl transferase (296 aa).

Transmembrane regions (helical) follow at residues 17–37 (LAVR…IVVG), 59–79 (MMFY…VLFY), 97–117 (GGMS…LFAW), 129–149 (FVAP…FING), 204–224 (SQLY…FLFA), 230–250 (MGAI…TVEF), and 257–277 (FLGL…PMIL). A 1,2-diacyl-sn-glycero-3-phospho-(1'-sn-glycerol) is bound at residue R142.

The protein belongs to the Lgt family.

It localises to the cell inner membrane. It carries out the reaction L-cysteinyl-[prolipoprotein] + a 1,2-diacyl-sn-glycero-3-phospho-(1'-sn-glycerol) = an S-1,2-diacyl-sn-glyceryl-L-cysteinyl-[prolipoprotein] + sn-glycerol 1-phosphate + H(+). Its pathway is protein modification; lipoprotein biosynthesis (diacylglyceryl transfer). Functionally, catalyzes the transfer of the diacylglyceryl group from phosphatidylglycerol to the sulfhydryl group of the N-terminal cysteine of a prolipoprotein, the first step in the formation of mature lipoproteins. This chain is Phosphatidylglycerol--prolipoprotein diacylglyceryl transferase, found in Burkholderia cenocepacia (strain HI2424).